Reading from the N-terminus, the 2582-residue chain is Chromodomain-helicase-DNA-binding protein 8 (2582 aa).

Disordered stretches follow at residues 22–111 (DDSF…PVLQ), 136–155 (MGVSATGVSPSNTGGQPSQS), 253–283 (VKGSAPAGNPGAAGPPLKPAVTLTSTPTQGE), and 349–377 (QKIQIVPQPPSSQPQPQPQPPPSAQPLTL). Composition is skewed to polar residues over residues 42 to 51 (SLDSLDQMNQ), 94 to 111 (DYTTQPTSQEQPAQPVLQ), and 141 to 155 (TGVSPSNTGGQPSQS). Positions 255 to 267 (GSAPAGNPGAAGP) are enriched in low complexity. Over residues 355–372 (PQPPSSQPQPQPQPPPSA) the composition is skewed to pro residues. The residue at position 434 (Ser-434) is a Phosphoserine. 2 disordered regions span residues 475–585 (RARG…VKRK) and 598–617 (DEEEEEVDVTGPIKPEPILP). The segment covering 495 to 518 (RPEEEGEKKRRKKSSGERLKEEKP) has biased composition (basic and acidic residues). A phosphoserine mark is found at Ser-555 and Ser-564. Residues 574–585 (QKRRSNRQVKRK) show a composition bias toward basic residues. Lys-611 participates in a covalent cross-link: Glycyl lysine isopeptide (Lys-Gly) (interchain with G-Cter in SUMO). Chromo domains follow at residues 644–711 (AIVD…AQMR) and 726–792 (VEVD…RVNR). The 175-residue stretch at 825 to 999 (LFNWYNRQNC…FSLLHFLEPS (175 aa)) folds into the Helicase ATP-binding domain. 838 to 845 (DEMGLGKT) contributes to the ATP binding site. Positions 950–953 (DEAH) match the DEAH box motif. The region spanning 1139-1290 (LIDKLLPKLK…KAVLQSMSGR (152 aa)) is the Helicase C-terminal domain. Phosphoserine is present on residues Ser-1422 and Ser-1426. A disordered region spans residues 1694–1715 (EDPEYKPLQGPPKDPDDEGDPL). Residues 1791–2304 (IARREKQQRW…LVELEVECME (514 aa)) are interaction with FAM124B. Phosphoserine occurs at positions 1978 and 1980. Positions 1990–2019 (QCTSRTASPSPLRPDAPVEKSPEESTVQVP) are disordered. Thr-1995 is modified (phosphothreonine). 3 positions are modified to phosphoserine: Ser-1997, Ser-1999, and Ser-2010. A Glycyl lysine isopeptide (Lys-Gly) (interchain with G-Cter in SUMO2) cross-link involves residue Lys-2027. A phosphoserine mark is found at Ser-2040, Ser-2070, and Ser-2072. Positions 2045–2120 (VRVGSSDTAP…RSRPKLYDEE (76 aa)) are disordered. Acidic residues predominate over residues 2065–2074 (EDEDDSDSEL). The span at 2077–2096 (SKLSPSSSSSSSSSSSSSST) shows a compositional bias: low complexity. Positions 2104–2118 (EEKLTADRSRPKLYD) are enriched in basic and acidic residues. 3 positions are modified to phosphoserine: Ser-2184, Ser-2202, and Ser-2204. The interval 2187–2233 (VTAGGILGPGNHLLDSPSLTPGEDGDSPVPTPRSGSAASMAEEEASA) is disordered. Thr-2206 is modified (phosphothreonine). The residue at position 2213 (Ser-2213) is a Phosphoserine. Thr-2217 carries the post-translational modification Phosphothreonine. Positions 2222–2233 (SAASMAEEEASA) are enriched in low complexity. A Phosphoserine modification is found at Ser-2225. Lys-2258 is covalently cross-linked (Glycyl lysine isopeptide (Lys-Gly) (interchain with G-Cter in SUMO2)). The segment at 2486–2582 (HVDSSTMLHH…NSDSSEDADD (97 aa)) is disordered. Positions 2493–2511 (LHHHHHHPHPHHHHHHHPG) are enriched in basic residues. Positions 2514–2529 (TTGYPSSPATTTSGTA) are enriched in low complexity. Ser-2520 bears the Phosphoserine mark. Residues 2537 to 2551 (PEDDDEEEDEEDDDL) are compositionally biased toward acidic residues.

This sequence belongs to the SNF2/RAD54 helicase family. CHD8 subfamily. In terms of assembly, interacts with CTNNB1 and PIAS3. Component of some MLL1/MLL complex, at least composed of the core components KMT2A/MLL1, ASH2L, HCFC1/HCF1, WDR5 and RBBP5, as well as the facultative components BACC1, CHD8, E2F6, HSP70, INO80C, KANSL1, LAS1L, MAX, MCRS1, MGA, KAT8/MOF, PELP1, PHF20, PRP31, RING2, RUVB1/TIP49A, RUVB2/TIP49B, SENP3, TAF1, TAF4, TAF6, TAF7, TAF9 and TEX10. Interacts with CHD7. Interacts with FAM124B. Interacts with p53/TP53 and histone H1. Interacts with CTCF. Interacts with TLK2. Interacts with HNRNPL in an RNA-dependent manner. In terms of processing, sumoylated.

It is found in the nucleus. It catalyses the reaction ATP + H2O = ADP + phosphate + H(+). Functionally, ATP-dependent chromatin-remodeling factor, it slides nucleosomes along DNA; nucleosome sliding requires ATP. Acts as a transcription repressor by remodeling chromatin structure and recruiting histone H1 to target genes. Suppresses p53/TP53-mediated apoptosis by recruiting histone H1 and preventing p53/TP53 transactivation activity. Acts as a negative regulator of Wnt signaling pathway by regulating beta-catenin (CTNNB1) activity. Negatively regulates CTNNB1-targeted gene expression by being recruited specifically to the promoter regions of several CTNNB1 responsive genes. Involved in both enhancer blocking and epigenetic remodeling at chromatin boundary via its interaction with CTCF. Acts as a suppressor of STAT3 activity by suppressing the LIF-induced STAT3 transcriptional activity. Also acts as a transcription activator via its interaction with ZNF143 by participating in efficient U6 RNA polymerase III transcription. Regulates alternative splicing of a core group of genes involved in neuronal differentiation, cell cycle and DNA repair. Enables H3K36me3-coupled transcription elongation and co-transcriptional RNA processing likely via interaction with HNRNPL. The polypeptide is Chromodomain-helicase-DNA-binding protein 8 (Mus musculus (Mouse)).